We begin with the raw amino-acid sequence, 1342 residues long: DNA-directed RNA polymerase subunit beta (1342 aa).

This sequence belongs to the RNA polymerase beta chain family. In terms of assembly, the RNAP catalytic core consists of 2 alpha, 1 beta, 1 beta' and 1 omega subunit. When a sigma factor is associated with the core the holoenzyme is formed, which can initiate transcription.

It carries out the reaction RNA(n) + a ribonucleoside 5'-triphosphate = RNA(n+1) + diphosphate. In terms of biological role, DNA-dependent RNA polymerase catalyzes the transcription of DNA into RNA using the four ribonucleoside triphosphates as substrates. The protein is DNA-directed RNA polymerase subunit beta of Pectobacterium carotovorum subsp. carotovorum (strain PC1).